The sequence spans 105 residues: MIASKFKIGQQVRHKLLGYLGVVIDIDPEYSLEKPTLDEVTKNDSLRKFPWYHVVMEDDEGKPIHTYLAEIQLGYEDTVIHPEQSTLDDLAESIRLQLQTPRLRN.

This sequence belongs to the HspQ family.

Its subcellular location is the cytoplasm. In terms of biological role, involved in the degradation of certain denaturated proteins, including DnaA, during heat shock stress. This chain is Heat shock protein HspQ, found in Blochmanniella floridana.